The primary structure comprises 176 residues: Flavodoxin (176 aa).

Positions 4–172 (IGIFFGTDTG…RLASWLEEIK (169 aa)) constitute a Flavodoxin-like domain.

It belongs to the flavodoxin family. It depends on FMN as a cofactor.

Functionally, low-potential electron donor to a number of redox enzymes. NifF is the electron donor to nitrogenase. This is Flavodoxin (nifF) from Klebsiella pneumoniae.